The primary structure comprises 255 residues: Putative OPA3-like protein CG13603 (255 aa).

Residues 108-154 (KENKKNELAQSEKMELTNMLTEMNFRLERQDAQIREMTRVLADLDSR) adopt a coiled-coil conformation. Residues 168-187 (VPFDPDTPDQSASARNPKKF) are disordered. A coiled-coil region spans residues 212–241 (DGRNRKAKEALQHLDEVAVQLEQSLGEAAT).

This sequence belongs to the OPA3 family.

This Drosophila melanogaster (Fruit fly) protein is Putative OPA3-like protein CG13603.